A 119-amino-acid chain; its full sequence is Dihydroneopterin aldolase (119 aa).

Residues Glu21, Tyr53, and 72-73 contribute to the substrate site; that span reads IE. The active-site Proton donor/acceptor is Lys99.

It belongs to the DHNA family.

The catalysed reaction is 7,8-dihydroneopterin = 6-hydroxymethyl-7,8-dihydropterin + glycolaldehyde. It functions in the pathway cofactor biosynthesis; tetrahydrofolate biosynthesis; 2-amino-4-hydroxy-6-hydroxymethyl-7,8-dihydropteridine diphosphate from 7,8-dihydroneopterin triphosphate: step 3/4. Functionally, catalyzes the conversion of 7,8-dihydroneopterin to 6-hydroxymethyl-7,8-dihydropterin. This chain is Dihydroneopterin aldolase (folB), found in Streptococcus pyogenes serotype M1.